We begin with the raw amino-acid sequence, 978 residues long: Chitin synthase 3 (978 aa).

The segment covering 1-13 (MGFNPQGQGNGPN) has biased composition (low complexity). 2 disordered regions span residues 1 to 95 (MGFN…FDGH) and 108 to 127 (GHYP…YEYP). An N-linked (GlcNAc...) asparagine glycan is attached at asparagine 72. A glycan (N-linked (GlcNAc...) asparagine) is linked at asparagine 604. 7 helical membrane passes run 641–661 (LVNV…TTII), 686–706 (IVNV…FVLA), 719–739 (VLSF…TGYL), 775–795 (LIII…FLYL), 803–823 (SFPQ…VYAF), 908–928 (VILW…DDFI), and 946–966 (VLLY…LWFI).

Belongs to the chitin synthase family. Class III subfamily.

Its subcellular location is the cell membrane. It carries out the reaction [(1-&gt;4)-N-acetyl-beta-D-glucosaminyl](n) + UDP-N-acetyl-alpha-D-glucosamine = [(1-&gt;4)-N-acetyl-beta-D-glucosaminyl](n+1) + UDP + H(+). Its function is as follows. Polymerizes chitin, a structural polymer of the cell wall and septum, by transferring the sugar moiety of UDP-GlcNAc to the non-reducing end of the growing chitin polymer. Is essential for viability. The protein is Chitin synthase 3 of Fusarium oxysporum f. sp. lycopersici (strain 4287 / CBS 123668 / FGSC 9935 / NRRL 34936) (Fusarium vascular wilt of tomato).